A 378-amino-acid polypeptide reads, in one-letter code: Holliday junction branch migration complex subunit RuvB 1 (378 aa).

Over residues 1 to 12 the composition is skewed to polar residues; sequence MAIISSRDTGQN. The disordered stretch occupies residues 1-62; it reads MAIISSRDTG…PGEAQEESLR (62 aa). The segment at 13–222 is large ATPase domain (RuvB-L); the sequence is AEGPKRRQQK…FGHVQRLRFY (210 aa). Residues leucine 61, arginine 62, glycine 103, lysine 106, threonine 107, threonine 108, 169 to 171, arginine 212, tyrosine 222, and arginine 259 contribute to the ATP site; that span reads EDF. Residue threonine 107 participates in Mg(2+) binding. A small ATPAse domain (RuvB-S) region spans residues 223-293; it reads EPHELVQIVL…VAAAALELFQ (71 aa). The segment at 296-378 is head domain (RuvB-H); it reads PMGLDWIDRK…EAQSPLPLWS (83 aa). DNA contacts are provided by arginine 351 and arginine 356.

Belongs to the RuvB family. As to quaternary structure, homohexamer. Forms an RuvA(8)-RuvB(12)-Holliday junction (HJ) complex. HJ DNA is sandwiched between 2 RuvA tetramers; dsDNA enters through RuvA and exits via RuvB. An RuvB hexamer assembles on each DNA strand where it exits the tetramer. Each RuvB hexamer is contacted by two RuvA subunits (via domain III) on 2 adjacent RuvB subunits; this complex drives branch migration. In the full resolvosome a probable DNA-RuvA(4)-RuvB(12)-RuvC(2) complex forms which resolves the HJ.

The protein resides in the cytoplasm. The enzyme catalyses ATP + H2O = ADP + phosphate + H(+). In terms of biological role, the RuvA-RuvB-RuvC complex processes Holliday junction (HJ) DNA during genetic recombination and DNA repair, while the RuvA-RuvB complex plays an important role in the rescue of blocked DNA replication forks via replication fork reversal (RFR). RuvA specifically binds to HJ cruciform DNA, conferring on it an open structure. The RuvB hexamer acts as an ATP-dependent pump, pulling dsDNA into and through the RuvAB complex. RuvB forms 2 homohexamers on either side of HJ DNA bound by 1 or 2 RuvA tetramers; 4 subunits per hexamer contact DNA at a time. Coordinated motions by a converter formed by DNA-disengaged RuvB subunits stimulates ATP hydrolysis and nucleotide exchange. Immobilization of the converter enables RuvB to convert the ATP-contained energy into a lever motion, pulling 2 nucleotides of DNA out of the RuvA tetramer per ATP hydrolyzed, thus driving DNA branch migration. The RuvB motors rotate together with the DNA substrate, which together with the progressing nucleotide cycle form the mechanistic basis for DNA recombination by continuous HJ branch migration. Branch migration allows RuvC to scan DNA until it finds its consensus sequence, where it cleaves and resolves cruciform DNA. In Synechococcus sp. (strain JA-3-3Ab) (Cyanobacteria bacterium Yellowstone A-Prime), this protein is Holliday junction branch migration complex subunit RuvB 1.